Here is a 243-residue protein sequence, read N- to C-terminus: Carboxy-S-adenosyl-L-methionine synthase (243 aa).

Residues Tyr-40, 65–67 (GCS), 90–91 (DN), 118–119 (DI), Asn-133, and Arg-200 each bind S-adenosyl-L-methionine.

This sequence belongs to the class I-like SAM-binding methyltransferase superfamily. Cx-SAM synthase family. Homodimer.

The enzyme catalyses prephenate + S-adenosyl-L-methionine = carboxy-S-adenosyl-L-methionine + 3-phenylpyruvate + H2O. Functionally, catalyzes the conversion of S-adenosyl-L-methionine (SAM) to carboxy-S-adenosyl-L-methionine (Cx-SAM). This Shewanella sp. (strain ANA-3) protein is Carboxy-S-adenosyl-L-methionine synthase.